The following is a 385-amino-acid chain: tRNA (guanine-N(7)-)-methyltransferase non-catalytic subunit wuho (385 aa).

WD repeat units lie at residues 68 to 108 (KVEV…AKLL), 155 to 194 (GHLS…DIHS), and 198 to 236 (GHKE…ELLH).

This sequence belongs to the WD repeat TRM82 family. In terms of assembly, forms a heterodimer with the catalytic subunit Mettl1. Interacts with mei-P26 and weakly interacts with bgcn; required for the function or formation of the mei-P26-bgcn-bam-sxl complex. Interacts with nanos; may be involved in mei-P26-dependent derepression of the BMP signaling pathway. Interacts with Myc; the interaction may be mediated by mei-P26 and may be involved in the regulation of ribosome biogenesis. As to expression, in testis, it is present at high level in hub cells, a niche for germline stem cells of testis. Ubiquitously expressed in all testicular cells throughout spermatogenesis. Ubiquitously expressed in all germline and somatic cells of the ovary.

The protein resides in the nucleus. Its subcellular location is the cytoplasm. Its pathway is tRNA modification; N(7)-methylguanine-tRNA biosynthesis. In terms of biological role, required for the Mettl1-dependent formation of N(7)-methylguanine at position 46 (m7G46) in tRNA. In the Mettl1-wuho methyltransferase complex, it is required to stabilize and induce conformational changes of the catalytic subunit. Required for binding of nanos mRNA and repression of translation by the mei-P26-bgcn-bam-sxl complex. May cooperate with mei-P26 and nanos to derepress the BMP signaling pathway. May cooperate with mei-P26 to suppress expression of a subset of microRNAs. May cooperate with mei-P26 to regulate bam expression levels in germline cells during gametogenesis. Required to promote mitosis to meiosis transition during gametogenesis. May regulate germline cell division in part by regulating ribosome biogenesis. This Drosophila grimshawi (Hawaiian fruit fly) protein is tRNA (guanine-N(7)-)-methyltransferase non-catalytic subunit wuho.